A 551-amino-acid chain; its full sequence is Sialic acid-binding Ig-like lectin 5 (551 aa).

Positions 1-16 (MLPLLLLPLLWGGSLQ) are cleaved as a signal peptide. The Extracellular portion of the chain corresponds to 17 to 441 (EKPVYELQVQ…LGTGVVPAAL (425 aa)). The region spanning 19–136 (PVYELQVQKS…KYSYQQNKLN (118 aa)) is the Ig-like V-type domain. 3 cysteine pairs are disulfide-bonded: Cys-36-Cys-170, Cys-41-Cys-101, and Cys-164-Cys-213. Asn-100 carries N-linked (GlcNAc...) asparagine glycosylation. N-acetylneuraminate is bound by residues Arg-119, Lys-127, and Ser-129. The Ig-like C2-type 1 domain maps to 146-229 (PDIHFLEPLE…AQVTTERTVQ (84 aa)). A disordered region spans residues 189-210 (DPETTRSSELTLTPRPEDHGTN). N-linked (GlcNAc...) asparagine glycans are attached at residues Asn-210, Asn-231, and Asn-253. The Ig-like C2-type 2 domain occupies 236 to 330 (PQTITIFRNG…GFLQIFLNLS (95 aa)). Cysteines 269 and 314 form a disulfide. Asn-328, Asn-375, Asn-384, and Asn-393 each carry an N-linked (GlcNAc...) asparagine glycan. The helical transmembrane segment at 442 to 462 (GGAGVMALLCICLCLIFFLIV) threads the bilayer. The Cytoplasmic segment spans residues 463–551 (KARRKQAAGR…TEYSEIKTSK (89 aa)). The segment at 469–551 (AAGRPEKMDD…TEYSEIKTSK (83 aa)) is disordered. An ITIM motif motif is present at residues 518-523 (LHYASL). Positions 528–537 (MKSREPKDQE) are enriched in basic and acidic residues. Positions 542–547 (TEYSEI) match the SLAM-like motif motif.

The protein belongs to the immunoglobulin superfamily. SIGLEC (sialic acid binding Ig-like lectin) family. In terms of tissue distribution, expressed by monocytic/myeloid lineage cells. Found at high levels in peripheral blood leukocytes, spleen, bone marrow and at lower levels in lymph node, lung, appendix, placenta, pancreas and thymus. Expressed by monocytes and neutrophils but absent from leukemic cell lines representing early stages of myelomonocytic differentiation.

It localises to the membrane. Its function is as follows. Putative adhesion molecule that mediates sialic-acid dependent binding to cells. Binds equally to alpha-2,3-linked and alpha-2,6-linked sialic acid. The sialic acid recognition site may be masked by cis interactions with sialic acids on the same cell surface. In Homo sapiens (Human), this protein is Sialic acid-binding Ig-like lectin 5 (SIGLEC5).